The following is an 831-amino-acid chain: Thymine dioxygenase JBP1-B (831 aa).

Residues 80–282 (VVGGVLLPGA…RLTCVCYYRA (203 aa)) form a thymine dioxygenase region. Fe cation-binding residues include H207, D209, and H257. R273 is a 2-oxoglutarate binding site. A DNA-binding JBP1 domain region spans residues 409-578 (LGGALKAAEE…IEEARRRGNA (170 aa)).

This sequence belongs to the TET family. JBP1 subfamily. Monomer. Binds to DNA as a monomer. Fe(2+) is required as a cofactor.

Its subcellular location is the nucleus. The enzyme catalyses thymine + 2-oxoglutarate + O2 = 5-hydroxymethyluracil + succinate + CO2. Its function is as follows. Dioxygenase that catalyzes the first step of DNA base J (beta-d-glucosyl-HOMedU) biosynthesis by converting thymine to 5-hydroxymethyluracil (HOMedU). DNA base J is a hypermodified thymidine residue found in the genome of kinetoplastid parasites, which is localized primarily to repetitive DNA, namely the telomeres, and is implicated in the regulation of antigenic variation. Also specifically binds to base J-containing DNA (J-DNA). Involved in propagation and maintenance of DNA base J synthesis initiated by JBP2 by specifically binding already synthesized DNA base J and propagating J synthesis. Thymine dioxygenase activity and J-DNA-binding are independent functions. In Trypanosoma cruzi (strain CL Brener), this protein is Thymine dioxygenase JBP1-B (JBP1B).